Here is a 515-residue protein sequence, read N- to C-terminus: MSRIKIFDTTLRDGEQSPGVNLNKAEKLEIAKQLEKYGVDRMEAGFPASSKGDFESVKQIAETIKSSSVIALARAVKSDIDIAYEALKGAEKPAIHIFLATSPIHMTYKLKKSPEQVIETAVNMVTYAKERFDEIEWSAEDATRSDWNFLAQIIEKVIEAGATVINLPDTVGYTTPEEYGKLFRFIKETVPNINQVALSCHCHNDLGMAVANSIAAVENGATQVEGTINGIGERAGNAALEEVAVALKIRSDYYPFETGLILKETKRTSDLVAKLTGMYVQANKAVIGRNAFSHESGIHQDGVLKNTETYEIITPEMVGVSSNTLFLGKHSGRHAFKDKLKEFGVELSEEELKTAFEQFKLLTDQKKEVTDDDLYTILMDIKTDSTVVDKYKLIQFGVSYDTAATPKANVILESPNGSLIEATQQGNGSVEALYKTINYLIAENITLVDYQINSVGGGKDALAESHVQIIINGETINGRGSAQDVLQASAVAFIQAVNRYYVQKKANLTRLVYES.

A Pyruvate carboxyltransferase domain is found at 4–266 (IKIFDTTLRD…ETGLILKETK (263 aa)). Residues aspartate 13, histidine 201, histidine 203, and asparagine 237 each contribute to the Mn(2+) site. Positions 392–515 (KLIQFGVSYD…ANLTRLVYES (124 aa)) are regulatory domain.

It belongs to the alpha-IPM synthase/homocitrate synthase family. LeuA type 1 subfamily. In terms of assembly, homodimer. Requires Mn(2+) as cofactor.

It localises to the cytoplasm. The enzyme catalyses 3-methyl-2-oxobutanoate + acetyl-CoA + H2O = (2S)-2-isopropylmalate + CoA + H(+). It functions in the pathway amino-acid biosynthesis; L-leucine biosynthesis; L-leucine from 3-methyl-2-oxobutanoate: step 1/4. Its function is as follows. Catalyzes the condensation of the acetyl group of acetyl-CoA with 3-methyl-2-oxobutanoate (2-ketoisovalerate) to form 3-carboxy-3-hydroxy-4-methylpentanoate (2-isopropylmalate). This chain is 2-isopropylmalate synthase, found in Oceanobacillus iheyensis (strain DSM 14371 / CIP 107618 / JCM 11309 / KCTC 3954 / HTE831).